The chain runs to 520 residues: Fumarate hydratase, mitochondrial (520 aa).

The N-terminal 39 residues, 1-39, are a transit peptide targeting the mitochondrion; the sequence is MASVAHISTAKAIFRAGGLPCRRLITPTLTGLPLKTHRM. Residues 153–155, 184–187, 194–196, and threonine 242 contribute to the substrate site; these read SGT, HPND, and SSN. Catalysis depends on histidine 243, which acts as the Proton donor/acceptor. The active site involves serine 373. Residues serine 374 and 379–381 each bind substrate; that span reads KVN.

Belongs to the class-II fumarase/aspartase family. Fumarase subfamily. As to quaternary structure, homotetramer.

It is found in the mitochondrion matrix. Its subcellular location is the cytoplasm. The protein localises to the nucleus. The catalysed reaction is (S)-malate = fumarate + H2O. The protein operates within carbohydrate metabolism; tricarboxylic acid cycle; (S)-malate from fumarate: step 1/1. Its function is as follows. Catalyzes the reversible stereospecific interconversion of fumarate to L-malate. In mitochondrion, catalyzes the hydration of fumarate to L-malate in the tricarboxylic acid (TCA) cycle to facilitate a transition step in the production of energy in the form of NADH. In cytoplasm and nucleus, involved in DNA repair in response to DNA damage: following DNA double-strand breaks (DSBs), translocates from the cytosol to the nucleus and promotes DNA repair by catalyzing the dehydration of L-malate to fumarate. This Schizosaccharomyces pombe (strain 972 / ATCC 24843) (Fission yeast) protein is Fumarate hydratase, mitochondrial (fum1).